Reading from the N-terminus, the 699-residue chain is MPINKSEKPESCDNVKVVVRCRPLNEREKSMCYKQAVSVDEMRGTITVHKTDSSNEPPKTFTFDTVFGPESKQLDVYNLTARPIIDSVLEGYNGTIFAYGQTGTGKTFTMEGVRAIPELRGIIPNSFAHIFGHIAKAEGDTRFLVRVSYLEIYNEEVRDLLGKDQTQRLEVKERPDVGVYIKDLSAYVVNNADDMDRIMTLGHKNRSVGATNMNEHSSRSHAIFTITIECSEKGIDGNMHVRMGKLHLVDLAGSERQAKTGATGQRLKEATKINLSLSTLGNVISALVDGKSTHVPYRNSKLTRLLQDSLGGNSKTMMCANIGPADYNYDETISTLRYANRAKNIKNKARINEDPKDALLRQFQKEIEELKKKLEEGEEISGSDISGSEEDDDEEGEVGEDGEKRKKRRGKKKVSPDKMIEMQAKIDEERKALETKLDMEEEERNKARAELEKREKDLLKAQQEHQSLLEKLSALEKKVIVGGVDLLAKAEEQEKLLEESNMELEERRKRAEQLRRELEEKEQERLDIEEKYTSLQEEAQGKTKKLKKVWTMLMAAKSEMADLQQEHQREIEGLLENIRQLSRELRLQMLIIDNFIPRDYQEMIENYVHWNEDIGEWQLKCVAYTGNNMRKQTPVPDKKEKDPFEVDLSHVYLAYTEESLRQSLMKLERPRTSKGKARPKTGRRKRSAKPETVIDSLLQ.

Positions 14–345 (NVKVVVRCRP…LRYANRAKNI (332 aa)) constitute a Kinesin motor domain. 100-107 (GQTGTGKT) serves as a coordination point for ATP. A coiled-coil region spans residues 355–590 (PKDALLRQFQ…LSRELRLQML (236 aa)). Disordered stretches follow at residues 372–421 (KKLE…KMIE) and 663–699 (SLMK…SLLQ). Residues 376-400 (EGEEISGSDISGSEEDDDEEGEVGE) are compositionally biased toward acidic residues. The segment covering 672-687 (TSKGKARPKTGRRKRS) has biased composition (basic residues). Phosphoserine is present on S687. The globular stretch occupies residues 697-699 (LLQ).

This sequence belongs to the TRAFAC class myosin-kinesin ATPase superfamily. Kinesin family. Kinesin II subfamily. Heterodimer of KIF3A and KIF3B. Interacts with CIMAP3. Interacts with CLN3. Interacts with DCTN1. Interacts with FLCN. Interacts with AP3B1.

Its subcellular location is the cytoplasm. The protein localises to the cytoskeleton. It localises to the cell projection. It is found in the cilium. The protein resides in the microtubule organizing center. Its subcellular location is the centrosome. The protein localises to the centriole. Its function is as follows. Microtubule-based anterograde translocator for membranous organelles. Plus end-directed microtubule sliding activity in vitro. Plays a role in primary cilia formation. Plays a role in centriole cohesion and subdistal appendage organization and function. Regulates the formation of the subdistal appendage via recruitment of DCTN1 to the centriole. Also required for ciliary basal feet formation and microtubule anchoring to mother centriole. The sequence is that of Kinesin-like protein KIF3A (KIF3A) from Homo sapiens (Human).